A 125-amino-acid chain; its full sequence is Subtelomeric hrmA-associated cluster protein cgnA (125 aa).

23 G-Q-I/R/S repeats span residues 11 to 13, 14 to 16, 17 to 19, 20 to 22, 23 to 25, 26 to 28, 29 to 31, 32 to 34, 35 to 37, 38 to 40, 41 to 43, 44 to 46, 47 to 49, 50 to 52, 53 to 55, 56 to 58, 59 to 61, 62 to 64, 65 to 67, 68 to 70, 71 to 73, 74 to 76, and 77 to 79; these read GQI, GPI, GQR, GQS, and GQA. A 23 X 3 AA approximate tandem repeats of G-Q-I/R/S region spans residues 11–79; it reads GQIGPIGQRG…IGQIGQIGQA (69 aa). A disordered region spans residues 15 to 57; sequence PIGQRGQSGQRGQSGQRGQSGQIGQSGQSGQSGQSGQSGQIGQ.

The protein resides in the secreted. Hypoxia responsive morphology factor that modulates the expression of the subtelomeric hrmA-associated cluster (HAC) containing genes that alter the hyphal surface (such as reduced total chitin or increased beta-glucan exposure) and perturb inter-hyphal interactions within the developing biofilms, resulting in a loss of vertically aligned polarized growing filaments. Consequently, this hypoxia-typic morphotype (called H-MORPH) with altered biofilm architecture leads to increased hypoxia fitness, increased host inflammation, rapid disease progression, and mortality in a murine model of invasive aspergillosis. GcnA is directly involved in the reduction total surface chitin and the increase beta-glucan exposure, and mediates the detachment of the extracellular matrix and especially of its component galactosaminogalactan (GAG). This Aspergillus fumigatus (strain CBS 144.89 / FGSC A1163 / CEA10) (Neosartorya fumigata) protein is Subtelomeric hrmA-associated cluster protein cgnA.